A 175-amino-acid polypeptide reads, in one-letter code: NADH-quinone oxidoreductase subunit I (175 aa).

4Fe-4S ferredoxin-type domains are found at residues 69–98 (KRDEQGRERCTSCFCCMWICPADAIYIEAA) and 115–144 (KKFEIDLLRCIFCGMCEEACPKGAIYLDGP). Cys-78, Cys-81, Cys-84, Cys-88, Cys-124, Cys-127, Cys-130, and Cys-134 together coordinate [4Fe-4S] cluster.

This sequence belongs to the complex I 23 kDa subunit family. NDH-1 is composed of 14 different subunits. Subunits NuoA, H, J, K, L, M, N constitute the membrane sector of the complex. [4Fe-4S] cluster is required as a cofactor.

It localises to the cell inner membrane. The catalysed reaction is a quinone + NADH + 5 H(+)(in) = a quinol + NAD(+) + 4 H(+)(out). NDH-1 shuttles electrons from NADH, via FMN and iron-sulfur (Fe-S) centers, to quinones in the respiratory chain. The immediate electron acceptor for the enzyme in this species is believed to be ubiquinone. Couples the redox reaction to proton translocation (for every two electrons transferred, four hydrogen ions are translocated across the cytoplasmic membrane), and thus conserves the redox energy in a proton gradient. In Leptospira interrogans serogroup Icterohaemorrhagiae serovar Lai (strain 56601), this protein is NADH-quinone oxidoreductase subunit I.